A 76-amino-acid polypeptide reads, in one-letter code: U14-hexatoxin-Hi1a (76 aa).

A signal peptide spans 1 to 18; the sequence is MMQLAVLICLSLVVNTFA. 3 disulfides stabilise this stretch: C21–C34, C27–C39, and C33–C61.

Expressed by the venom gland.

Its subcellular location is the secreted. Its function is as follows. Probable ion channel inhibitor. The polypeptide is U14-hexatoxin-Hi1a (Hadronyche infensa (Fraser island funnel-web spider)).